The chain runs to 901 residues: Desmocollin-2 (901 aa).

The N-terminal stretch at 1-27 is a signal peptide; it reads MEAARPSGSWNGALCRLLLLTLAILIF. A propeptide spanning residues 28–135 is cleaved from the precursor; that stretch reads ASDACKNVTL…KEKVLRRAKR (108 aa). N-linked (GlcNAc...) asparagine glycosylation is found at Asn34 and Asn166. 5 Cadherin domains span residues 136–243, 244–355, 356–471, 472–579, and 580–694; these read RWAP…YPIF, TEET…LPTF, TRTS…GPEC, NPPI…FIPK, and KTVI…QLGK. Over 136 to 694 the chain is Extracellular; sequence RWAPIPCSML…IGGGGVQLGK (559 aa). Asn392 carries N-linked (GlcNAc...) (complex) asparagine glycosylation. 2 N-linked (GlcNAc...) asparagine glycosylation sites follow: Asn546 and Asn629. A helical transmembrane segment spans residues 695–715; the sequence is WAILAILLGIALLFCILFTLV. The Cytoplasmic portion of the chain corresponds to 716-901; that stretch reads CGASGTSKQP…RTLAEACMKR (186 aa). 3 positions are modified to phosphoserine: Ser864, Ser868, and Ser873.

As to quaternary structure, interacts with DSP, PKP2 and JUP. Interacts with DSG3; the interaction may limit the interaction of DSC3 with p38MAPK family members and therefore repress p38MAPK signaling activation. In terms of tissue distribution, expressed at intercalated disks in the heart, where it is colocalized with CDH2 (at protein level). Expressed in intestinal mucosal cells (at protein level).

It localises to the cell membrane. Its subcellular location is the cell junction. The protein localises to the desmosome. Functionally, a component of desmosome cell-cell junctions which are required for positive regulation of cellular adhesion. Promotes timely incorporation of DSG2 into desmosome intercellular junctions and promotes interaction of desmosome cell junctions with intermediate filament cytokeratin, via modulation of DSP phosphorylation. Plays an important role in desmosome-mediated maintenance of intestinal epithelial cell intercellular adhesion strength and barrier function. Positively regulates wound healing of intestinal mucosa via promotion of epithelial cell migration, and also plays a role in mechanotransduction of force between intestinal epithelial cells and extracellular matrix. May contribute to epidermal cell positioning (stratification) by mediating differential adhesiveness between cells that express different isoforms. May promote p38MAPK signaling activation that facilitates keratinocyte migration. The polypeptide is Desmocollin-2 (Homo sapiens (Human)).